Reading from the N-terminus, the 485-residue chain is Glycogen synthase (485 aa).

Lys-20 contacts ADP-alpha-D-glucose.

This sequence belongs to the glycosyltransferase 1 family. Bacterial/plant glycogen synthase subfamily.

The enzyme catalyses [(1-&gt;4)-alpha-D-glucosyl](n) + ADP-alpha-D-glucose = [(1-&gt;4)-alpha-D-glucosyl](n+1) + ADP + H(+). It functions in the pathway glycan biosynthesis; glycogen biosynthesis. In terms of biological role, synthesizes alpha-1,4-glucan chains using ADP-glucose. This chain is Glycogen synthase, found in Vibrio vulnificus (strain CMCP6).